The primary structure comprises 386 residues: Vesicle-associated protein 2-2 (386 aa).

Met-1 carries the post-translational modification N-acetylmethionine. Residues 1 to 363 (MNMPLLDIQP…TKKIVKEVHN (363 aa)) are Cytoplasmic-facing. An MSP domain is found at 5-125 (LLDIQPRTLQ…EENKLRVTLV (121 aa)). Ser-279 is modified (phosphoserine). The stretch at 300–353 (ELKLVKDIEEMKLKVDALESKLKQADSTISKLMEERSISSQHRQSLQHELAELR) forms a coiled coil. Residues 364–384 (GFPLLYVCVVAFIAYVIGHFL) traverse the membrane as a helical; Anchor for type IV membrane protein segment.

The protein belongs to the VAMP-associated protein (VAP) (TC 9.B.17) family. In terms of assembly, interacts with cowpea mosaic virus (CPMV) NTP-binding protein (NTB).

The protein localises to the endoplasmic reticulum membrane. May play a role in vesicle trafficking. This chain is Vesicle-associated protein 2-2 (PVA22), found in Arabidopsis thaliana (Mouse-ear cress).